We begin with the raw amino-acid sequence, 372 residues long: tRNA pseudouridine synthase D (372 aa).

Aspartate 85 (nucleophile) is an active-site residue. One can recognise a TRUD domain in the interval 160 to 330; the sequence is GFANYFGYQR…MQGSRRFMWG (171 aa).

The protein belongs to the pseudouridine synthase TruD family.

The enzyme catalyses uridine(13) in tRNA = pseudouridine(13) in tRNA. Functionally, responsible for synthesis of pseudouridine from uracil-13 in transfer RNAs. In Campylobacter jejuni subsp. jejuni serotype O:6 (strain 81116 / NCTC 11828), this protein is tRNA pseudouridine synthase D.